The following is a 201-amino-acid chain: Large ribosomal subunit protein bL25 (201 aa).

The protein belongs to the bacterial ribosomal protein bL25 family. CTC subfamily. In terms of assembly, part of the 50S ribosomal subunit; part of the 5S rRNA/L5/L18/L25 subcomplex. Contacts the 5S rRNA. Binds to the 5S rRNA independently of L5 and L18.

This is one of the proteins that binds to the 5S RNA in the ribosome where it forms part of the central protuberance. This Thiobacillus denitrificans (strain ATCC 25259 / T1) protein is Large ribosomal subunit protein bL25.